A 526-amino-acid chain; its full sequence is Na(+)/H(+) antiporter NhaB (526 aa).

Transmembrane regions (helical) follow at residues 25-45 (ILLFLVINPIAFYLDPFAAGW), 52-72 (IFTLAMALKCYPLQPGGLLAI), 89-109 (LVANIEVLLLLVFMVAGIYFM), 130-164 (LSLAFCLVSAFLSAFLDALTVIAVVISVATGFYAI), 204-224 (LMMHAAIGTALGGVCTLVGEP), 242-262 (IRMAPVTIPVFICGLLTCILV), 305-325 (AVIAIWLILGLAMHLAAVGLI), 350-370 (QEALPFTALLAVFFSVVAVII), 391-411 (LALFYLANGLLSMVSDNVFVG), 448-468 (VATPNGQAAFLFMLTSALAPL), 479-499 (MALPYTLVLGLVGFFSVELLL), and 505-525 (WFYQAGWLLPHSGAPAVLPAL).

It belongs to the NhaB Na(+)/H(+) (TC 2.A.34) antiporter family.

Its subcellular location is the cell inner membrane. The enzyme catalyses 2 Na(+)(in) + 3 H(+)(out) = 2 Na(+)(out) + 3 H(+)(in). Na(+)/H(+) antiporter that extrudes sodium in exchange for external protons. In Aeromonas salmonicida (strain A449), this protein is Na(+)/H(+) antiporter NhaB.